We begin with the raw amino-acid sequence, 179 residues long: Bifunctional protein PyrR (179 aa).

The short motif at 100 to 112 is the PRPP-binding element; the sequence is VILVDDVLFTGRT.

Belongs to the purine/pyrimidine phosphoribosyltransferase family. PyrR subfamily. Homodimer and homohexamer; in equilibrium.

It carries out the reaction UMP + diphosphate = 5-phospho-alpha-D-ribose 1-diphosphate + uracil. Regulates transcriptional attenuation of the pyrimidine nucleotide (pyr) operon by binding in a uridine-dependent manner to specific sites on pyr mRNA. This disrupts an antiterminator hairpin in the RNA and favors formation of a downstream transcription terminator, leading to a reduced expression of downstream genes. Its function is as follows. Also displays a weak uracil phosphoribosyltransferase activity which is not physiologically significant. This chain is Bifunctional protein PyrR, found in Geobacillus sp. (strain WCH70).